A 303-amino-acid polypeptide reads, in one-letter code: Glycine--tRNA ligase alpha subunit (303 aa).

This sequence belongs to the class-II aminoacyl-tRNA synthetase family. In terms of assembly, tetramer of two alpha and two beta subunits.

Its subcellular location is the cytoplasm. The catalysed reaction is tRNA(Gly) + glycine + ATP = glycyl-tRNA(Gly) + AMP + diphosphate. The sequence is that of Glycine--tRNA ligase alpha subunit from Klebsiella pneumoniae subsp. pneumoniae (strain ATCC 700721 / MGH 78578).